A 242-amino-acid chain; its full sequence is 4-hydroxy-tetrahydrodipicolinate reductase (242 aa).

NAD(+) is bound by residues G8 to M13, G75 to T77, and A99 to M102. H131 (proton donor/acceptor) is an active-site residue. H132 contacts (S)-2,3,4,5-tetrahydrodipicolinate. K135 serves as the catalytic Proton donor. G141–T142 is a (S)-2,3,4,5-tetrahydrodipicolinate binding site.

This sequence belongs to the DapB family.

Its subcellular location is the cytoplasm. It carries out the reaction (S)-2,3,4,5-tetrahydrodipicolinate + NAD(+) + H2O = (2S,4S)-4-hydroxy-2,3,4,5-tetrahydrodipicolinate + NADH + H(+). The enzyme catalyses (S)-2,3,4,5-tetrahydrodipicolinate + NADP(+) + H2O = (2S,4S)-4-hydroxy-2,3,4,5-tetrahydrodipicolinate + NADPH + H(+). The protein operates within amino-acid biosynthesis; L-lysine biosynthesis via DAP pathway; (S)-tetrahydrodipicolinate from L-aspartate: step 4/4. In terms of biological role, catalyzes the conversion of 4-hydroxy-tetrahydrodipicolinate (HTPA) to tetrahydrodipicolinate. This chain is 4-hydroxy-tetrahydrodipicolinate reductase, found in Campylobacter jejuni subsp. jejuni serotype O:6 (strain 81116 / NCTC 11828).